The chain runs to 177 residues: Probable nicotinate-nucleotide adenylyltransferase (177 aa).

Belongs to the NadD family.

The enzyme catalyses nicotinate beta-D-ribonucleotide + ATP + H(+) = deamido-NAD(+) + diphosphate. It functions in the pathway cofactor biosynthesis; NAD(+) biosynthesis; deamido-NAD(+) from nicotinate D-ribonucleotide: step 1/1. In terms of biological role, catalyzes the reversible adenylation of nicotinate mononucleotide (NaMN) to nicotinic acid adenine dinucleotide (NaAD). The protein is Probable nicotinate-nucleotide adenylyltransferase of Nitratiruptor sp. (strain SB155-2).